Reading from the N-terminus, the 109-residue chain is Large ribosomal subunit protein uL22 (109 aa).

Belongs to the universal ribosomal protein uL22 family. Part of the 50S ribosomal subunit.

In terms of biological role, this protein binds specifically to 23S rRNA; its binding is stimulated by other ribosomal proteins, e.g. L4, L17, and L20. It is important during the early stages of 50S assembly. It makes multiple contacts with different domains of the 23S rRNA in the assembled 50S subunit and ribosome. Functionally, the globular domain of the protein is located near the polypeptide exit tunnel on the outside of the subunit, while an extended beta-hairpin is found that lines the wall of the exit tunnel in the center of the 70S ribosome. The protein is Large ribosomal subunit protein uL22 of Bordetella petrii (strain ATCC BAA-461 / DSM 12804 / CCUG 43448).